Reading from the N-terminus, the 61-residue chain is Small ribosomal subunit protein uS14 (61 aa).

Zn(2+) is bound by residues cysteine 24, cysteine 27, cysteine 40, and cysteine 43.

It belongs to the universal ribosomal protein uS14 family. Zinc-binding uS14 subfamily. As to quaternary structure, part of the 30S ribosomal subunit. Contacts proteins S3 and S10. Requires Zn(2+) as cofactor.

Binds 16S rRNA, required for the assembly of 30S particles and may also be responsible for determining the conformation of the 16S rRNA at the A site. In Syntrophus aciditrophicus (strain SB), this protein is Small ribosomal subunit protein uS14.